Here is a 1941-residue protein sequence, read N- to C-terminus: Myosin light chain kinase, smooth muscle (1941 aa).

2 consecutive Ig-like C2-type domains span residues 33 to 122 (PAFI…VELT) and 156 to 244 (PKFA…AELS). C177 and C228 are joined by a disulfide. Position 226 is a phosphotyrosine; by ABL1 (Y226). The segment at 255–329 (AVRGTKAPSP…RKVPQSSILQ (75 aa)) is disordered. Polar residues predominate over residues 286–305 (NCPSPQRSGSSARATNSHLK). S295 bears the Phosphoserine mark. Over residues 306-320 (SPQEPKPKLCEDAPR) the composition is skewed to basic and acidic residues. Phosphoserine is present on residues S333 and S355. 4 consecutive Ig-like C2-type domains span residues 402–485 (PRFE…GQVS), 502–587 (PSFS…ATVT), 611–699 (PIFL…AVLT), and 709–809 (PWFI…APPR). 2 disulfide bridges follow: C423–C475 and C523–C571. Y452 carries the post-translational modification Phosphotyrosine; by ABL1 and SRC. A disulfide bridge links C730 with C793. Y780 carries the phosphotyrosine; by ABL1 modification. A run of 4 repeats spans residues 856–883 (DVRG…VGQL), 884–911 (DFRD…AEQM), 912–939 (DFRA…PQQV), and 940–966 (DFRS…AATP). The tract at residues 856-985 (DVRGLLKRRV…KKSPSENGGN (130 aa)) is 5 X 28 AA approximate tandem repeats. An actin-binding (calcium/calmodulin-sensitive) region spans residues 911 to 951 (MDFRANLQRQVKPKTISEEERKVHSPQQVDFRSVLAKKGTP). The interval 920–1120 (QVKPKTISEE…KRPESQGSAP (201 aa)) is disordered. S935 is subject to Phosphoserine. Residues 936-951 (PQQVDFRSVLAKKGTP) form a calmodulin-binding region. The stretch at 967-985 (DFRSVLGGKKKSPSENGGN) is one 1-5; truncated repeat. 5 repeat units span residues 990-1002 (LNVK…TPAG), 1003-1014 (DAQAIGALKPVG), 1015-1026 (NAKPAETPKPIG), 1027-1038 (NAKPTETLKPVG), and 1039-1049 (NTKPAETLKPI). The segment at 990–1049 (LNVKAGESPTPAGDAQAIGALKPVGNAKPAETPKPIGNAKPTETLKPVGNTKPAETLKPI) is 5 X 12 AA approximate tandem repeats. Positions 1048–1482 (PIANAQPSGS…TVTVNTEQKV (435 aa)) are actin-binding (calcium/calmodulin-insensitive). Positions 1052–1065 (AQPSGSLKPVTNAQ) are enriched in polar residues. Over residues 1085 to 1099 (AGKEEVKEVKNDVNC) the composition is skewed to basic and acidic residues. One can recognise an Ig-like C2-type 7 domain in the interval 1120-1208 (PVFKEKLQDV…GQAECSCQVT (89 aa)). A disulfide bond links C1141 and C1192. The disordered stretch occupies residues 1212–1257 (AQTSENTKAPEMKSRRPKSSLPPVLGTESDATVKKKPAPKTPTKAA). The 89-residue stretch at 1260-1348 (PQIIQFPEDQ…GSRQAQVNLT (89 aa)) folds into the Ig-like C2-type 8 domain. A Fibronectin type-III domain is found at 1356–1449 (PAGTPCASDI…ESELTAVGEK (94 aa)). Residues 1435 to 1469 (SEPSQESELTAVGEKPEEPKDEVEVSDDDEKEPEV) form a disordered region. Positions 1453–1467 (PKDEVEVSDDDEKEP) are enriched in acidic residues. S1460 carries the post-translational modification Phosphoserine. Phosphotyrosine; by ABL1 is present on Y1471. The region spanning 1486–1741 (YDIEERLGSG…CTQCLQHPWL (256 aa)) is the Protein kinase domain. ATP is bound by residues 1492 to 1500 (LGSGKFGQV) and K1515. Y1597 is modified (phosphotyrosine; by ABL1). D1607 serves as the catalytic Proton acceptor. A Phosphotyrosine; by ABL1 modification is found at Y1657. A calmodulin-binding region spans residues 1733–1796 (TQCLQHPWLM…SGLSGRKSST (64 aa)). 5 positions are modified to phosphoserine: S1781, S1782, S1794, S1795, and S1798. The tract at residues 1789–1809 (LSGRKSSTGSPTSPINAEKLE) is disordered. Residues 1792 to 1803 (RKSSTGSPTSPI) show a composition bias toward polar residues. Residue T1800 is modified to Phosphothreonine. Position 1801 is a phosphoserine (S1801). In terms of domain architecture, Ig-like C2-type 9 spans 1831–1920 (PYFSKTIRDL…GEATCTAELI (90 aa)). The cysteines at positions 1852 and 1904 are disulfide-linked.

Belongs to the protein kinase superfamily. CAMK Ser/Thr protein kinase family. In terms of assembly, all isoforms including Telokin bind calmodulin. Interacts with CTTN; this interaction is reduced during thrombin-induced endothelial cell (EC) contraction but is promoted by the barrier-protective agonist sphingosine 1-phosphate (S1P) within lamellipodia. A complex made of ABL1, CTTN and MYLK regulates cortical actin-based cytoskeletal rearrangement critical to sphingosine 1-phosphate (S1P)-mediated endothelial cell (EC) barrier enhancement. Binds to NAA10/ARD1. Interacts with SVIL and PTK2B/PYK2. Mg(2+) serves as cofactor. Ca(2+) is required as a cofactor. Can probably be down-regulated by phosphorylation. Tyrosine phosphorylation by ABL1 increases kinase activity, reverses MLCK-mediated inhibition of Arp2/3-mediated actin polymerization, and enhances CTTN-binding. Phosphorylation by SRC at Tyr-452 promotes CTTN binding. Post-translationally, the C-terminus is deglutamylated by AGTPBP1/CCP1, AGBL1/CCP4 and AGBL4/CCP6, leading to the formation of Myosin light chain kinase, smooth muscle, deglutamylated form. The consequences of C-terminal deglutamylation are unknown. As to expression, smooth muscle isoform is expressed in all tissues with highest levels in bladder, uterus, vas deferens, colon, ileum, and tracheae. Isoform 1 is expressed in lung, bladder, and vas deferens. Telokin is expressed in smooth muscle cells of the gut, reproductive tract and urinary tract, including in uterus, vas deferens, bladder, colon, kidney, ureter and ovary. Telokin is also detected in the trachea.

The protein localises to the cytoplasm. It localises to the cell projection. It is found in the lamellipodium. Its subcellular location is the cleavage furrow. The protein resides in the cytoskeleton. The protein localises to the stress fiber. It carries out the reaction L-seryl-[myosin light chain] + ATP = O-phospho-L-seryl-[myosin light chain] + ADP + H(+). It catalyses the reaction L-threonyl-[myosin light chain] + ATP = O-phospho-L-threonyl-[myosin light chain] + ADP + H(+). Its function is as follows. Calcium/calmodulin-dependent myosin light chain kinase implicated in smooth muscle contraction via phosphorylation of myosin light chains (MLC). Also regulates actin-myosin interaction through a non-kinase activity. Phosphorylates PTK2B/PYK2 and myosin light-chains. Involved in the inflammatory response (e.g. apoptosis, vascular permeability, leukocyte diapedesis), cell motility and morphology, airway hyperreactivity and other activities relevant to asthma. Required for tonic airway smooth muscle contraction that is necessary for physiological and asthmatic airway resistance. Necessary for gastrointestinal motility. Implicated in the regulation of endothelial as well as vascular permeability, probably via the regulation of cytoskeletal rearrangements. In the nervous system it has been shown to control the growth initiation of astrocytic processes in culture and to participate in transmitter release at synapses formed between cultured sympathetic ganglion cells. Critical participant in signaling sequences that result in fibroblast apoptosis. Plays a role in the regulation of epithelial cell survival. Required for epithelial wound healing, especially during actomyosin ring contraction during purse-string wound closure. Mediates RhoA-dependent membrane blebbing. Triggers TRPC5 channel activity in a calcium-dependent signaling, by inducing its subcellular localization at the plasma membrane. Promotes cell migration (including tumor cells) and tumor metastasis. PTK2B/PYK2 activation by phosphorylation mediates ITGB2 activation and is thus essential to trigger neutrophil transmigration during acute lung injury (ALI). May regulate optic nerve head astrocyte migration. Probably involved in mitotic cytoskeletal regulation. Regulates tight junction probably by modulating ZO-1 exchange in the perijunctional actomyosin ring. Mediates burn-induced microvascular barrier injury; triggers endothelial contraction in the development of microvascular hyperpermeability by phosphorylating MLC. Essential for intestinal barrier dysfunction. Mediates Giardia spp.-mediated reduced epithelial barrier function during giardiasis intestinal infection via reorganization of cytoskeletal F-actin and tight junctional ZO-1. Necessary for hypotonicity-induced Ca(2+) entry and subsequent activation of volume-sensitive organic osmolyte/anion channels (VSOAC) in cervical cancer cells. The polypeptide is Myosin light chain kinase, smooth muscle (Mus musculus (Mouse)).